Reading from the N-terminus, the 610-residue chain is Menin (610 aa).

Residues 214–390 (GVAERSWLYL…SLLEAGEERP (177 aa)) are interaction with FANCD2. Positions 460 to 552 (REAEAAEAEE…SPPPEGPVLT (93 aa)) are disordered. Over residues 484 to 500 (RRESKPEEPPPPKKPAL) the composition is skewed to basic and acidic residues. S487 and S543 each carry phosphoserine. Residue T594 is modified to Phosphothreonine.

In terms of assembly, component of the MLL-HCF complex, at least composed of KMT2A/MLL1, MEN1, ASH2L, RBBP5, DPY30, WDR5, HCFC1 and HCFC2. Component of the menin-associated histone methyltransferase complex, at least composed of KMT2B/MLL4, MEN1, ASH2L, RBBP5, DPY30 and WDR5. Interacts with POLR2B. Interacts with POLR2A phosphorylated at 'Ser-5', but not with the unphosphorylated, nor 'Ser-2' phosphorylated POLR2A forms. Interacts with FANCD2 and DBF4. Interacts with JUND (via MBM motif); inhibits the interaction of JUND with MAPK10 and the phosphorylation of JUND by MAP kinases MAPK8 and MAPK10. Interacts with SMAD3, but not with SMAD2, nor SMAD4. Directly interacts with NFKB1, NFKB2 and RELA. Interacts with KMT2A (via MBM motif). The KMT2A-MEN1 complex interacts with PSIP1 with a greater affinity as MEN1 enhances interaction of KMT2A with PSIP1. Interacts with the fusion protein KMT2A-MLLT3. As to expression, ubiquitous.

It localises to the nucleus. Essential component of a MLL/SET1 histone methyltransferase (HMT) complex, a complex that specifically methylates 'Lys-4' of histone H3 (H3K4). Functions as a transcriptional regulator. Binds to the TERT promoter and represses telomerase expression. Plays a role in TGFB1-mediated inhibition of cell-proliferation, possibly regulating SMAD3 transcriptional activity. Represses JUND-mediated transcriptional activation on AP1 sites, as well as that mediated by NFKB subunit RELA. Positively regulates HOXC8 and HOXC6 gene expression. May be involved in normal hematopoiesis through the activation of HOXA9 expression. May be involved in DNA repair. The protein is Menin (MEN1) of Homo sapiens (Human).